The sequence spans 971 residues: Translation initiation factor IF-2 (971 aa).

The segment covering 49–63 has biased composition (basic and acidic residues); the sequence is HLRKSHGATDGDKRK. 2 disordered regions span residues 49 to 85 and 99 to 386; these read HLRKSHGATDGDKRKITLTRKHTSEIKQSDATGKART and RDDV…PTEP. Positions 105-114 are enriched in low complexity; that stretch reads GAEQGQAQVA. Over residues 121–181 the composition is skewed to basic and acidic residues; that stretch reads ELKRREEEAR…EEEAAAKRAA (61 aa). A compositionally biased stretch (low complexity) spans 182–200; it reads AEAAAAQQAAAQQAAAEQE. Over residues 209 to 260 the composition is skewed to basic and acidic residues; the sequence is DEARAAAERAAQREAAKKAEDAAREAADKARAEQEEISKRRAAAEAEARAIR. Over residues 303-325 the composition is skewed to low complexity; it reads ARPAVKKPAGAAAPATTQAPAGA. Over residues 355-368 the composition is skewed to gly residues; it reads SSGGVDRGWRGGPK. In terms of domain architecture, tr-type G spans 471-640; it reads PRPPVVTVMG…LLQAEVLELK (170 aa). Residues 480–487 form a G1 region; the sequence is GHVDHGKT. Residue 480-487 participates in GTP binding; that stretch reads GHVDHGKT. Residues 505–509 form a G2 region; that stretch reads GITQH. Residues 526 to 529 form a G3 region; it reads DTPG. Residues 526 to 530 and 580 to 583 each bind GTP; these read DTPGH and NKID. Positions 580 to 583 are G4; that stretch reads NKID. The G5 stretch occupies residues 616 to 618; that stretch reads SAK.

The protein belongs to the TRAFAC class translation factor GTPase superfamily. Classic translation factor GTPase family. IF-2 subfamily.

It localises to the cytoplasm. In terms of biological role, one of the essential components for the initiation of protein synthesis. Protects formylmethionyl-tRNA from spontaneous hydrolysis and promotes its binding to the 30S ribosomal subunits. Also involved in the hydrolysis of GTP during the formation of the 70S ribosomal complex. In Burkholderia cenocepacia (strain ATCC BAA-245 / DSM 16553 / LMG 16656 / NCTC 13227 / J2315 / CF5610) (Burkholderia cepacia (strain J2315)), this protein is Translation initiation factor IF-2.